Consider the following 87-residue polypeptide: Mitochondrial import inner membrane translocase subunit TIM9 (87 aa).

The Twin CX3C motif motif lies at 35–59 (CFDDCVNDFTSNSLTSKETSCIAKC). 2 cysteine pairs are disulfide-bonded: Cys35-Cys59 and Cys39-Cys55.

This sequence belongs to the small Tim family. As to quaternary structure, heterohexamer; composed of 3 copies of TIM9 and 3 copies of TIM10, named soluble 70 kDa complex. Associates with the TIM22 complex, whose core is composed of TIM22 and TIM54. Interacts with the transmembrane regions of multi-pass transmembrane proteins in transit.

It is found in the mitochondrion inner membrane. Its function is as follows. Mitochondrial intermembrane chaperone that participates in the import and insertion of multi-pass transmembrane proteins into the mitochondrial inner membrane. Also required for the transfer of beta-barrel precursors from the TOM complex to the sorting and assembly machinery (SAM complex) of the outer membrane. Acts as a chaperone-like protein that protects the hydrophobic precursors from aggregation and guide them through the mitochondrial intermembrane space. The chain is Mitochondrial import inner membrane translocase subunit TIM9 (TIM9) from Candida albicans (strain SC5314 / ATCC MYA-2876) (Yeast).